We begin with the raw amino-acid sequence, 202 residues long: Large ribosomal subunit protein uL18 (202 aa).

The protein belongs to the universal ribosomal protein uL18 family. As to quaternary structure, part of the 50S ribosomal subunit. Contacts the 5S and 23S rRNAs.

Its function is as follows. This is one of the proteins that bind and probably mediate the attachment of the 5S RNA into the large ribosomal subunit, where it forms part of the central protuberance. This Staphylothermus marinus (strain ATCC 43588 / DSM 3639 / JCM 9404 / F1) protein is Large ribosomal subunit protein uL18.